The chain runs to 444 residues: Glutamyl-tRNA reductase (444 aa).

Substrate is bound by residues 49 to 52 (TCNR), S109, 114 to 116 (ETQ), and Q120. Catalysis depends on C50, which acts as the Nucleophile. Position 189 to 194 (189 to 194 (GAGKMG)) interacts with NADP(+).

The protein belongs to the glutamyl-tRNA reductase family. In terms of assembly, homodimer.

The enzyme catalyses (S)-4-amino-5-oxopentanoate + tRNA(Glu) + NADP(+) = L-glutamyl-tRNA(Glu) + NADPH + H(+). It functions in the pathway porphyrin-containing compound metabolism; protoporphyrin-IX biosynthesis; 5-aminolevulinate from L-glutamyl-tRNA(Glu): step 1/2. In terms of biological role, catalyzes the NADPH-dependent reduction of glutamyl-tRNA(Glu) to glutamate 1-semialdehyde (GSA). This Bacillus cereus (strain ATCC 10987 / NRS 248) protein is Glutamyl-tRNA reductase.